The following is a 142-amino-acid chain: Metallothiol transferase FosB (142 aa).

The VOC domain maps to 5-120 (SVNHICFSVS…DGHKIELHTG (116 aa)). Mg(2+) contacts are provided by His8, His67, and Glu116. Glu116 (proton donor/acceptor) is an active-site residue.

Belongs to the fosfomycin resistance protein family. FosB subfamily. In terms of assembly, homodimer. It depends on Mg(2+) as a cofactor.

Its subcellular location is the cytoplasm. Its function is as follows. Metallothiol transferase which confers resistance to fosfomycin by catalyzing the addition of a thiol cofactor to fosfomycin. L-cysteine is probably the physiological thiol donor. This chain is Metallothiol transferase FosB, found in Staphylococcus epidermidis (strain ATCC 12228 / FDA PCI 1200).